The following is a 338-amino-acid chain: Large ribosomal subunit protein uL10 (338 aa).

The interval 303–338 (VEVSAAPAAEEEKEEEKKEEEKKEEDTGAAGLALLF) is disordered. Basic and acidic residues predominate over residues 317-328 (EEKKEEEKKEED).

This sequence belongs to the universal ribosomal protein uL10 family. Part of the 50S ribosomal subunit. Forms part of the ribosomal stalk which helps the ribosome interact with GTP-bound translation factors. Forms a heptameric L10(L12)2(L12)2(L12)2 complex, where L10 forms an elongated spine to which the L12 dimers bind in a sequential fashion.

Functionally, forms part of the ribosomal stalk, playing a central role in the interaction of the ribosome with GTP-bound translation factors. In Methanocaldococcus jannaschii (strain ATCC 43067 / DSM 2661 / JAL-1 / JCM 10045 / NBRC 100440) (Methanococcus jannaschii), this protein is Large ribosomal subunit protein uL10.